The sequence spans 57 residues: Small ribosomal subunit protein bS21 (57 aa).

It belongs to the bacterial ribosomal protein bS21 family.

This Bacillus pumilus (strain SAFR-032) protein is Small ribosomal subunit protein bS21.